Here is a 334-residue protein sequence, read N- to C-terminus: Holliday junction branch migration complex subunit RuvB (334 aa).

The large ATPase domain (RuvB-L) stretch occupies residues 4–184 (ADRLIQPQIQ…FGIPLRLEFY (181 aa)). Residues arginine 24, glycine 65, lysine 68, threonine 69, threonine 70, 131–133 (EDY), arginine 174, tyrosine 184, and arginine 221 contribute to the ATP site. A Mg(2+)-binding site is contributed by threonine 69. The interval 185–255 (NIKDLSTIVT…VAEHALDLLD (71 aa)) is small ATPAse domain (RuvB-S). Positions 258-334 (SEGFDYMDRK…YQHFELIKPE (77 aa)) are head domain (RuvB-H). The DNA site is built by arginine 294, arginine 313, and arginine 318.

This sequence belongs to the RuvB family. Homohexamer. Forms an RuvA(8)-RuvB(12)-Holliday junction (HJ) complex. HJ DNA is sandwiched between 2 RuvA tetramers; dsDNA enters through RuvA and exits via RuvB. An RuvB hexamer assembles on each DNA strand where it exits the tetramer. Each RuvB hexamer is contacted by two RuvA subunits (via domain III) on 2 adjacent RuvB subunits; this complex drives branch migration. In the full resolvosome a probable DNA-RuvA(4)-RuvB(12)-RuvC(2) complex forms which resolves the HJ.

It is found in the cytoplasm. The catalysed reaction is ATP + H2O = ADP + phosphate + H(+). In terms of biological role, the RuvA-RuvB-RuvC complex processes Holliday junction (HJ) DNA during genetic recombination and DNA repair, while the RuvA-RuvB complex plays an important role in the rescue of blocked DNA replication forks via replication fork reversal (RFR). RuvA specifically binds to HJ cruciform DNA, conferring on it an open structure. The RuvB hexamer acts as an ATP-dependent pump, pulling dsDNA into and through the RuvAB complex. RuvB forms 2 homohexamers on either side of HJ DNA bound by 1 or 2 RuvA tetramers; 4 subunits per hexamer contact DNA at a time. Coordinated motions by a converter formed by DNA-disengaged RuvB subunits stimulates ATP hydrolysis and nucleotide exchange. Immobilization of the converter enables RuvB to convert the ATP-contained energy into a lever motion, pulling 2 nucleotides of DNA out of the RuvA tetramer per ATP hydrolyzed, thus driving DNA branch migration. The RuvB motors rotate together with the DNA substrate, which together with the progressing nucleotide cycle form the mechanistic basis for DNA recombination by continuous HJ branch migration. Branch migration allows RuvC to scan DNA until it finds its consensus sequence, where it cleaves and resolves cruciform DNA. In Shewanella baltica (strain OS195), this protein is Holliday junction branch migration complex subunit RuvB.